The primary structure comprises 78 residues: Large ribosomal subunit protein bL28 (78 aa).

It belongs to the bacterial ribosomal protein bL28 family.

This Glaesserella parasuis serovar 5 (strain SH0165) (Haemophilus parasuis) protein is Large ribosomal subunit protein bL28.